The primary structure comprises 296 residues: Nitrogenase iron protein 1 (296 aa).

ATP is bound at residue G11 to S18. C99 is a [4Fe-4S] cluster binding site. R102 is modified (ADP-ribosylarginine; by dinitrogenase reductase ADP-ribosyltransferase). C133 contacts [4Fe-4S] cluster.

This sequence belongs to the NifH/BchL/ChlL family. In terms of assembly, homodimer. It depends on [4Fe-4S] cluster as a cofactor. In terms of processing, the reversible ADP-ribosylation of Arg-102 inactivates the nitrogenase reductase and regulates nitrogenase activity.

The catalysed reaction is N2 + 8 reduced [2Fe-2S]-[ferredoxin] + 16 ATP + 16 H2O = H2 + 8 oxidized [2Fe-2S]-[ferredoxin] + 2 NH4(+) + 16 ADP + 16 phosphate + 6 H(+). Its function is as follows. The key enzymatic reactions in nitrogen fixation are catalyzed by the nitrogenase complex, which has 2 components: the iron protein and the molybdenum-iron protein. This chain is Nitrogenase iron protein 1 (nifH1), found in Azorhizobium caulinodans (strain ATCC 43989 / DSM 5975 / JCM 20966 / LMG 6465 / NBRC 14845 / NCIMB 13405 / ORS 571).